We begin with the raw amino-acid sequence, 469 residues long: Glutamate--tRNA ligase 2 (469 aa).

Residues 10–20 (PSPTGYLHIGG) carry the 'HIGH' region motif. Positions 99, 101, 126, and 128 each coordinate Zn(2+). The 'KMSKS' region signature appears at 237–241 (RLSKR). Position 240 (K240) interacts with ATP.

Belongs to the class-I aminoacyl-tRNA synthetase family. Glutamate--tRNA ligase type 1 subfamily. As to quaternary structure, monomer. Zn(2+) serves as cofactor.

It is found in the cytoplasm. The catalysed reaction is tRNA(Glu) + L-glutamate + ATP = L-glutamyl-tRNA(Glu) + AMP + diphosphate. Its function is as follows. Catalyzes the attachment of glutamate to tRNA(Glu) in a two-step reaction: glutamate is first activated by ATP to form Glu-AMP and then transferred to the acceptor end of tRNA(Glu). The protein is Glutamate--tRNA ligase 2 of Coxiella burnetii (strain CbuG_Q212) (Coxiella burnetii (strain Q212)).